The primary structure comprises 312 residues: tRNA dimethylallyltransferase (312 aa).

ATP is bound at residue 10-17 (GPTAVGKT). Residue 12 to 17 (TAVGKT) coordinates substrate. Positions 35-38 (DSMQ) are interaction with substrate tRNA.

This sequence belongs to the IPP transferase family. Monomer. It depends on Mg(2+) as a cofactor.

The catalysed reaction is adenosine(37) in tRNA + dimethylallyl diphosphate = N(6)-dimethylallyladenosine(37) in tRNA + diphosphate. In terms of biological role, catalyzes the transfer of a dimethylallyl group onto the adenine at position 37 in tRNAs that read codons beginning with uridine, leading to the formation of N6-(dimethylallyl)adenosine (i(6)A). The polypeptide is tRNA dimethylallyltransferase (Alkaliphilus metalliredigens (strain QYMF)).